The primary structure comprises 2415 residues: Bradyzoite-formation deficient protein 1 (2415 aa).

Disordered stretches follow at residues 369 to 392 (WNKP…PEET), 418 to 481 (HLTS…PYTR), and 761 to 845 (DGCG…QDTQ). Basic residues predominate over residues 419–429 (LTSRQHPNPRP). Residues 430-443 (RMKEEHCGREREVL) show a composition bias toward basic and acidic residues. 2 stretches are compositionally biased toward polar residues: residues 444–460 (SSEQ…TPAS) and 832–843 (PRTTSSSSYGQD). The Myb-like domain maps to 921 to 968 (WSAEEDASLAELVSRKGFKWALISSQLTGAFGIPRTGKQCRERWFNHV). In terms of domain architecture, HTH myb-type spans 969–1023 (NPEVKKGDWSAEEDAMILMLQNELGNRWATIAKKLRGRTENAVKNRFISLSNARL). A DNA-binding region (H-T-H motif) is located at residues 996-1019 (WATIAKKLRGRTENAVKNRFISLS). Disordered stretches follow at residues 1027–1050 (RPKR…KSSG), 1098–1127 (VSRP…LKNT), 1206–1270 (NDER…NGLD), 1319–1343 (PACD…AQRQ), 1501–1521 (QLWT…QQHE), 1905–1932 (VSRD…TSQS), 1959–2013 (RVRW…GSTA), and 2161–2222 (GTDA…EMQD). Residues 1036-1050 (DCFSNRRTGSGKSSG) show a composition bias toward polar residues. The segment covering 1227 to 1237 (AHEHADIARSD) has biased composition (basic and acidic residues). 2 stretches are compositionally biased toward polar residues: residues 1327-1343 (PQNS…AQRQ) and 1501-1520 (QLWT…NQQH). The span at 1974-1985 (SVSSGASNSATT) shows a compositional bias: polar residues. The segment covering 2181 to 2197 (QAHRRDGHDMQRVQRCD) has biased composition (basic and acidic residues).

It localises to the nucleus. Master transcription factor that controls the differentiation of acute-stage tachyzoite parasites into chronic-stage bradyzoites, which form intracellular cysts resistant to immune clearance and existing therapies. Sufficient to drive differentiation into bradyzoite stage. Following translation in response to stress conditions, binds to the promoter of many chronic stage-specific genes and promotes their expression, thereby driving differentiation into bradyzoites. The chain is Bradyzoite-formation deficient protein 1 from Toxoplasma gondii (strain ATCC 50611 / Me49).